Here is a 193-residue protein sequence, read N- to C-terminus: Alpha-S2-casein (193 aa).

An N-terminal signal peptide occupies residues 1–15 (MKFFIFTCLLAVVLA). A phosphoserine mark is found at Ser-23, Ser-24, Ser-25, Ser-28, Ser-47, Ser-68, Ser-123, Ser-125, Ser-128, and Ser-136.

The protein belongs to the alpha-casein family. As to expression, mammary gland specific. Secreted in milk.

It localises to the secreted. Functionally, important role in the capacity of milk to transport calcium phosphate. The polypeptide is Alpha-S2-casein (CSN1S2) (Camelus dromedarius (Dromedary)).